We begin with the raw amino-acid sequence, 317 residues long: L-lactate dehydrogenase 1 (317 aa).

NAD(+) is bound by residues Val17, Asp38, Lys43, Tyr69, and 83 to 84 (GA). The substrate site is built by Gln86 and Arg92. NAD(+)-binding positions include Ser105, 122–124 (ATN), and Ser147. 124-127 (NPVD) is a binding site for substrate. Residue 152–155 (DSAR) coordinates substrate. The Proton acceptor role is filled by His179. Position 223 is a phosphotyrosine (Tyr223). Residue Thr232 participates in substrate binding.

The protein belongs to the LDH/MDH superfamily. LDH family. In terms of assembly, homotetramer.

The protein resides in the cytoplasm. It catalyses the reaction (S)-lactate + NAD(+) = pyruvate + NADH + H(+). The protein operates within fermentation; pyruvate fermentation to lactate; (S)-lactate from pyruvate: step 1/1. Catalyzes the conversion of lactate to pyruvate (Potential). Appears to be the primary factor that allows S.aureus growth during nitrosative stress in both aerobically and anaerobically cultured cells. In Staphylococcus aureus (strain JH1), this protein is L-lactate dehydrogenase 1.